We begin with the raw amino-acid sequence, 142 residues long: Putative pre-16S rRNA nuclease (142 aa).

Belongs to the YqgF nuclease family.

The protein localises to the cytoplasm. Functionally, could be a nuclease involved in processing of the 5'-end of pre-16S rRNA. In Mesoplasma florum (strain ATCC 33453 / NBRC 100688 / NCTC 11704 / L1) (Acholeplasma florum), this protein is Putative pre-16S rRNA nuclease.